Here is a 324-residue protein sequence, read N- to C-terminus: Viral cathepsin (324 aa).

Residues 1 to 16 (MNKIMLCLLVCGVVHA) form the signal peptide. The propeptide at 17-113 (ATYDLLKAPN…VILDRPPDRG (97 aa)) is activation peptide. Cystine bridges form between Cys134–Cys175, Cys168–Cys208, and Cys263–Cys311. The active site involves Cys137. A glycan (N-linked (GlcNAc...) asparagine; by host) is linked at Asn159. Residues His270 and Asn290 contribute to the active site.

This sequence belongs to the peptidase C1 family. Synthesized as an inactive proenzyme and activated by proteolytic removal of the inhibitory propeptide.

It catalyses the reaction Endopeptidase of broad specificity, hydrolyzing substrates of both cathepsin L and cathepsin B.. In terms of biological role, cysteine protease that plays an essential role in host liquefaction to facilitate horizontal transmission of the virus. May participate in the degradation of foreign protein expressed by the baculovirus system. The polypeptide is Viral cathepsin (VCATH) (Orgyia pseudotsugata (Douglas-fir tussock moth)).